Reading from the N-terminus, the 234-residue chain is HTH-type transcriptional repressor FabR (234 aa).

The region spanning 29 to 89 (KTRRSLVEAA…TMVDESGLML (61 aa)) is the HTH tetR-type domain. The H-T-H motif DNA-binding region spans 52 to 71 (SLREVAREAGIAPTSFYRHF).

As to quaternary structure, homodimer.

The protein resides in the cytoplasm. With respect to regulation, has been suggested to require either an unsaturated acyl carrier protein or unsaturated acyl-CoA (but not their saturated equivalents) for DNA-binding. Another group suggests that unsaturated thioesters are not essential but act instead to enhance DNA-binding. Functionally, binds the promoter region of at least fabA and fabB, but probably not yqfA. Represses the transcription of fabA and fabB, involved in unsaturated fatty acid (UFA) biosynthesis. By controlling UFA production, FabR directly influences the physical properties of the membrane bilayer. This Escherichia coli (strain K12) protein is HTH-type transcriptional repressor FabR.